Here is a 116-residue protein sequence, read N- to C-terminus: Large ribosomal subunit protein uL18 (116 aa).

It belongs to the universal ribosomal protein uL18 family. As to quaternary structure, part of the 50S ribosomal subunit; part of the 5S rRNA/L5/L18/L25 subcomplex. Contacts the 5S and 23S rRNAs.

This is one of the proteins that bind and probably mediate the attachment of the 5S RNA into the large ribosomal subunit, where it forms part of the central protuberance. The chain is Large ribosomal subunit protein uL18 from Pseudomonas putida (strain GB-1).